The primary structure comprises 101 residues: Urease subunit beta (101 aa).

It belongs to the urease beta subunit family. As to quaternary structure, heterotrimer of UreA (gamma), UreB (beta) and UreC (alpha) subunits. Three heterotrimers associate to form the active enzyme.

The protein localises to the cytoplasm. It carries out the reaction urea + 2 H2O + H(+) = hydrogencarbonate + 2 NH4(+). The protein operates within nitrogen metabolism; urea degradation; CO(2) and NH(3) from urea (urease route): step 1/1. The polypeptide is Urease subunit beta (Actinobacillus pleuropneumoniae serotype 5b (strain L20)).